The following is a 211-amino-acid chain: Envelope protein UL45 homolog (211 aa).

Residues 1 to 46 (MMSPTPEDDRDLVVVRGRLRMMDNGAEHDRERRSYTAWPHLCCGCT) lie on the Intravirion side of the membrane. A helical; Signal-anchor for type II membrane protein membrane pass occupies residues 47-67 (IGIILTMFVIATTLLLASLFA). Topologically, residues 68–211 (FSYMSLESGT…SSILSNAIMK (144 aa)) are virion surface. Residues Asn96 and Asn133 are each glycosylated (N-linked (GlcNAc...) asparagine; by host).

It belongs to the herpesviridae HHV-1 UL45 family.

It is found in the virion membrane. The chain is Envelope protein UL45 homolog (UL45H) from Gallid herpesvirus 2 (strain Chicken/Md5/ATCC VR-987) (GaHV-2).